A 357-amino-acid chain; its full sequence is tRNA-specific 2-thiouridylase MnmA (357 aa).

ATP-binding positions include 10–17 (GISGGVDS) and Ile-36. Cys-98 acts as the Nucleophile in catalysis. Cys-98 and Cys-194 form a disulfide bridge. Residue Gly-122 coordinates ATP. The interval 144–146 (KDQ) is interaction with tRNA. Cys-194 functions as the Cysteine persulfide intermediate in the catalytic mechanism. Positions 303–304 (RY) are interaction with tRNA.

This sequence belongs to the MnmA/TRMU family.

Its subcellular location is the cytoplasm. The enzyme catalyses S-sulfanyl-L-cysteinyl-[protein] + uridine(34) in tRNA + AH2 + ATP = 2-thiouridine(34) in tRNA + L-cysteinyl-[protein] + A + AMP + diphosphate + H(+). Catalyzes the 2-thiolation of uridine at the wobble position (U34) of tRNA, leading to the formation of s(2)U34. The sequence is that of tRNA-specific 2-thiouridylase MnmA from Chlorobium phaeovibrioides (strain DSM 265 / 1930) (Prosthecochloris vibrioformis (strain DSM 265)).